A 165-amino-acid polypeptide reads, in one-letter code: SsrA-binding protein (165 aa).

Residues 1-10 (MSKKGKKKSK) are compositionally biased toward basic residues. The disordered stretch occupies residues 1–21 (MSKKGKKKSKNNSSVDGNRRL).

It belongs to the SmpB family.

The protein localises to the cytoplasm. Functionally, required for rescue of stalled ribosomes mediated by trans-translation. Binds to transfer-messenger RNA (tmRNA), required for stable association of tmRNA with ribosomes. tmRNA and SmpB together mimic tRNA shape, replacing the anticodon stem-loop with SmpB. tmRNA is encoded by the ssrA gene; the 2 termini fold to resemble tRNA(Ala) and it encodes a 'tag peptide', a short internal open reading frame. During trans-translation Ala-aminoacylated tmRNA acts like a tRNA, entering the A-site of stalled ribosomes, displacing the stalled mRNA. The ribosome then switches to translate the ORF on the tmRNA; the nascent peptide is terminated with the 'tag peptide' encoded by the tmRNA and targeted for degradation. The ribosome is freed to recommence translation, which seems to be the essential function of trans-translation. The sequence is that of SsrA-binding protein from Prochlorococcus marinus (strain NATL1A).